The chain runs to 569 residues: Proline--tRNA ligase (569 aa).

This sequence belongs to the class-II aminoacyl-tRNA synthetase family. ProS type 1 subfamily. As to quaternary structure, homodimer.

Its subcellular location is the cytoplasm. The catalysed reaction is tRNA(Pro) + L-proline + ATP = L-prolyl-tRNA(Pro) + AMP + diphosphate. Its function is as follows. Catalyzes the attachment of proline to tRNA(Pro) in a two-step reaction: proline is first activated by ATP to form Pro-AMP and then transferred to the acceptor end of tRNA(Pro). As ProRS can inadvertently accommodate and process non-cognate amino acids such as alanine and cysteine, to avoid such errors it has two additional distinct editing activities against alanine. One activity is designated as 'pretransfer' editing and involves the tRNA(Pro)-independent hydrolysis of activated Ala-AMP. The other activity is designated 'posttransfer' editing and involves deacylation of mischarged Ala-tRNA(Pro). The misacylated Cys-tRNA(Pro) is not edited by ProRS. This Campylobacter jejuni subsp. jejuni serotype O:23/36 (strain 81-176) protein is Proline--tRNA ligase.